The primary structure comprises 150 residues: Large ribosomal subunit protein bL9 (150 aa).

This sequence belongs to the bacterial ribosomal protein bL9 family.

Functionally, binds to the 23S rRNA. The sequence is that of Large ribosomal subunit protein bL9 from Shewanella pealeana (strain ATCC 700345 / ANG-SQ1).